A 351-amino-acid polypeptide reads, in one-letter code: Phospho-N-acetylmuramoyl-pentapeptide-transferase (351 aa).

Transmembrane regions (helical) follow at residues 17 to 37 (TAYA…FIIL), 63 to 83 (IPTM…FFWI), 85 to 105 (LWNV…CLGF), 135 to 155 (ISVT…YFPF), 158 to 178 (SLKL…LISA), 190 to 210 (GLAI…AYLT), 230 to 250 (LVIF…FNAY), 254 to 274 (IMMG…TALI), 279 to 299 (ILFA…IIQV), and 328 to 348 (QVVI…LSTL).

Belongs to the glycosyltransferase 4 family. MraY subfamily. Mg(2+) serves as cofactor.

The protein resides in the cell inner membrane. It carries out the reaction UDP-N-acetyl-alpha-D-muramoyl-L-alanyl-gamma-D-glutamyl-meso-2,6-diaminopimeloyl-D-alanyl-D-alanine + di-trans,octa-cis-undecaprenyl phosphate = di-trans,octa-cis-undecaprenyl diphospho-N-acetyl-alpha-D-muramoyl-L-alanyl-D-glutamyl-meso-2,6-diaminopimeloyl-D-alanyl-D-alanine + UMP. It functions in the pathway cell wall biogenesis; peptidoglycan biosynthesis. Functionally, catalyzes the initial step of the lipid cycle reactions in the biosynthesis of the cell wall peptidoglycan: transfers peptidoglycan precursor phospho-MurNAc-pentapeptide from UDP-MurNAc-pentapeptide onto the lipid carrier undecaprenyl phosphate, yielding undecaprenyl-pyrophosphoryl-MurNAc-pentapeptide, known as lipid I. In Borrelia hermsii (strain HS1 / DAH), this protein is Phospho-N-acetylmuramoyl-pentapeptide-transferase.